Here is a 376-residue protein sequence, read N- to C-terminus: N-acetyldiaminopimelate deacetylase (376 aa).

D69 is an active-site residue. E128 (proton acceptor) is an active-site residue.

This sequence belongs to the peptidase M20A family. N-acetyldiaminopimelate deacetylase subfamily.

The enzyme catalyses N-acetyl-(2S,6S)-2,6-diaminopimelate + H2O = (2S,6S)-2,6-diaminopimelate + acetate. Its pathway is amino-acid biosynthesis; L-lysine biosynthesis via DAP pathway; LL-2,6-diaminopimelate from (S)-tetrahydrodipicolinate (acetylase route): step 3/3. In terms of biological role, catalyzes the conversion of N-acetyl-diaminopimelate to diaminopimelate and acetate. This Bacillus mycoides (strain KBAB4) (Bacillus weihenstephanensis) protein is N-acetyldiaminopimelate deacetylase.